The primary structure comprises 595 residues: Sorting nexin-9 (595 aa).

The region spanning 1-62 (MATKARVMYD…PTDYVEILPS (62 aa)) is the SH3 domain. Residues 91–201 (SSSAASNNHQ…GNSRASSSSM (111 aa)) are disordered. 2 stretches are compositionally biased toward polar residues: residues 111–121 (WSASKSGNWES) and 135–145 (QRNTNTPNNWD). 2 positions are modified to phosphoserine: Ser116 and Ser121. Over residues 160 to 169 (GDDDDWDEDW) the composition is skewed to acidic residues. Over residues 191-201 (RGNSRASSSSM) the composition is skewed to polar residues. Phosphoserine is present on residues Ser197 and Ser200. The critical for tubulation activity stretch occupies residues 201-213 (MKIPLNKFPGFAK). The residue at position 216 (Thr216) is a Phosphothreonine. Tyr239 carries the post-translational modification Phosphotyrosine. Positions 250 to 361 (FDCVVADPRK…QFLNFRDEKE (112 aa)) constitute a PX domain. Residues Arg286, Lys288, and Arg327 each contribute to the a 1,2-diacyl-sn-glycero-3-phospho-(1D-myo-inositol-4,5-bisphosphate) site. The residue at position 288 (Lys288) is an N6-acetyllysine. The BAR domain occupies 392–595 (LVEIEQKCEA…RQALSRFPVM (204 aa)).

This sequence belongs to the sorting nexin family. In terms of assembly, homodimer, and homooligomer. Heterodimer with SNX18. Interacts with ITCH. Interacts (via SH3 domain) with TNK2, WASL and ACTR3. Identified in a complex with TNK2 and clathrin heavy chains. Identified in a complex with the AP-2 complex, clathrin and DNM2. Interacts (via SH3 domain) with DNM1 and DNM2. Identified in an oligomeric complex containing DNM1 and SNX9. Interacts with FCHSD1. Interacts with ADAM9 and ADAM15 cytoplasmic tails. Ubiquitinated by ITCH. In terms of processing, phosphorylated on tyrosine residues by TNK2. Phosphorylation promotes its activity in the degradation of EGFR. In terms of tissue distribution, widely expressed, with highest levels in heart and placenta, and lowest levels in thymus and peripheral blood leukocytes.

The protein resides in the cytoplasmic vesicle membrane. It localises to the cell membrane. The protein localises to the cytoplasmic vesicle. It is found in the clathrin-coated vesicle. Its subcellular location is the golgi apparatus. The protein resides in the trans-Golgi network. It localises to the cell projection. The protein localises to the ruffle. It is found in the cytoplasm. Functionally, involved in endocytosis and intracellular vesicle trafficking, both during interphase and at the end of mitosis. Required for efficient progress through mitosis and cytokinesis. Required for normal formation of the cleavage furrow at the end of mitosis. Plays a role in endocytosis via clathrin-coated pits, but also clathrin-independent, actin-dependent fluid-phase endocytosis. Plays a role in macropinocytosis. Promotes internalization of TNFR. Promotes degradation of EGFR after EGF signaling. Stimulates the GTPase activity of DNM1. Promotes DNM1 oligomerization. Promotes activation of the Arp2/3 complex by WASL, and thereby plays a role in the reorganization of the F-actin cytoskeleton. Binds to membranes enriched in phosphatidylinositol 4,5-bisphosphate and promotes membrane tubulation. Has lower affinity for membranes enriched in phosphatidylinositol 3-phosphate. The sequence is that of Sorting nexin-9 (SNX9) from Homo sapiens (Human).